The following is a 70-amino-acid chain: DNA-directed RNA polymerase subunit omega (70 aa).

Belongs to the RNA polymerase subunit omega family. As to quaternary structure, the RNAP catalytic core consists of 2 alpha, 1 beta, 1 beta' and 1 omega subunit. When a sigma factor is associated with the core the holoenzyme is formed, which can initiate transcription.

The catalysed reaction is RNA(n) + a ribonucleoside 5'-triphosphate = RNA(n+1) + diphosphate. Promotes RNA polymerase assembly. Latches the N- and C-terminal regions of the beta' subunit thereby facilitating its interaction with the beta and alpha subunits. This Caldanaerobacter subterraneus subsp. tengcongensis (strain DSM 15242 / JCM 11007 / NBRC 100824 / MB4) (Thermoanaerobacter tengcongensis) protein is DNA-directed RNA polymerase subunit omega.